The following is a 334-amino-acid chain: Glycerol-3-phosphate dehydrogenase [NAD(P)+] 2 (334 aa).

Positions 16, 36, 37, and 110 each coordinate NADPH. Sn-glycerol 3-phosphate contacts are provided by lysine 110 and glycine 140. Alanine 144 contributes to the NADPH binding site. Residues lysine 195, aspartate 248, serine 258, arginine 259, and asparagine 260 each contribute to the sn-glycerol 3-phosphate site. The active-site Proton acceptor is the lysine 195. Arginine 259 lines the NADPH pocket. The NADPH site is built by valine 282 and glutamate 284.

This sequence belongs to the NAD-dependent glycerol-3-phosphate dehydrogenase family.

It localises to the cytoplasm. It carries out the reaction sn-glycerol 3-phosphate + NAD(+) = dihydroxyacetone phosphate + NADH + H(+). The enzyme catalyses sn-glycerol 3-phosphate + NADP(+) = dihydroxyacetone phosphate + NADPH + H(+). It functions in the pathway membrane lipid metabolism; glycerophospholipid metabolism. Catalyzes the reduction of the glycolytic intermediate dihydroxyacetone phosphate (DHAP) to sn-glycerol 3-phosphate (G3P), the key precursor for phospholipid synthesis. The polypeptide is Glycerol-3-phosphate dehydrogenase [NAD(P)+] 2 (Mycobacterium bovis (strain ATCC BAA-935 / AF2122/97)).